A 301-amino-acid chain; its full sequence is Recombination-associated protein RdgC (301 aa).

This sequence belongs to the RdgC family.

The protein localises to the cytoplasm. It is found in the nucleoid. Its function is as follows. May be involved in recombination. The polypeptide is Recombination-associated protein RdgC (Xanthomonas axonopodis pv. citri (strain 306)).